The sequence spans 433 residues: 3-phosphoshikimate 1-carboxyvinyltransferase (433 aa).

Lys23, Ser24, and Arg28 together coordinate 3-phosphoshikimate. Lys23 is a binding site for phosphoenolpyruvate. Phosphoenolpyruvate-binding residues include Gly95 and Arg123. 4 residues coordinate 3-phosphoshikimate: Ser167, Gln169, Asp317, and Lys344. Gln169 serves as a coordination point for phosphoenolpyruvate. Catalysis depends on Asp317, which acts as the Proton acceptor. The phosphoenolpyruvate site is built by Arg348 and Arg390.

It belongs to the EPSP synthase family. Monomer.

It is found in the cytoplasm. The catalysed reaction is 3-phosphoshikimate + phosphoenolpyruvate = 5-O-(1-carboxyvinyl)-3-phosphoshikimate + phosphate. It functions in the pathway metabolic intermediate biosynthesis; chorismate biosynthesis; chorismate from D-erythrose 4-phosphate and phosphoenolpyruvate: step 6/7. Functionally, catalyzes the transfer of the enolpyruvyl moiety of phosphoenolpyruvate (PEP) to the 5-hydroxyl of shikimate-3-phosphate (S3P) to produce enolpyruvyl shikimate-3-phosphate and inorganic phosphate. In Staphylococcus epidermidis (strain ATCC 12228 / FDA PCI 1200), this protein is 3-phosphoshikimate 1-carboxyvinyltransferase.